Consider the following 317-residue polypeptide: Acetyl-coenzyme A carboxylase carboxyl transferase subunit alpha (317 aa).

Residues 40-294 enclose the CoA carboxyltransferase C-terminal domain; that stretch reads RLQKKSEELT…KARLLTDLED (255 aa).

Belongs to the AccA family. As to quaternary structure, acetyl-CoA carboxylase is a heterohexamer composed of biotin carboxyl carrier protein (AccB), biotin carboxylase (AccC) and two subunits each of ACCase subunit alpha (AccA) and ACCase subunit beta (AccD).

The protein resides in the cytoplasm. It carries out the reaction N(6)-carboxybiotinyl-L-lysyl-[protein] + acetyl-CoA = N(6)-biotinyl-L-lysyl-[protein] + malonyl-CoA. It functions in the pathway lipid metabolism; malonyl-CoA biosynthesis; malonyl-CoA from acetyl-CoA: step 1/1. In terms of biological role, component of the acetyl coenzyme A carboxylase (ACC) complex. First, biotin carboxylase catalyzes the carboxylation of biotin on its carrier protein (BCCP) and then the CO(2) group is transferred by the carboxyltransferase to acetyl-CoA to form malonyl-CoA. The protein is Acetyl-coenzyme A carboxylase carboxyl transferase subunit alpha of Actinobacillus succinogenes (strain ATCC 55618 / DSM 22257 / CCUG 43843 / 130Z).